A 301-amino-acid polypeptide reads, in one-letter code: uncharacterized protein (301 aa).

A divalent metal cation-binding residues include Glu-146, Glu-148, and Asp-177.

Belongs to the FAH family.

This is an uncharacterized protein from Staphylococcus epidermidis (strain ATCC 12228 / FDA PCI 1200).